The chain runs to 736 residues: Gephyrin (736 aa).

Residues 14-153 (QIRVGVLTVS…LPGSKKGSQE (140 aa)) form an MPT Mo-transferase region. Disordered regions lie at residues 181–232 (DELE…DSSS) and 260–290 (TASL…PKVQ). Over residues 187–199 (PSPPPPLSPPPTT) the composition is skewed to pro residues. The segment covering 261 to 290 (ASLSTTPSESPRAQATSRLSTASCPTPKVQ) has biased composition (polar residues). Residues 294–736 (SSKENILRAS…VVDVMVIGRL (443 aa)) form an MPT adenylyltransferase region.

It in the N-terminal section; belongs to the MoaB/Mog family. This sequence in the C-terminal section; belongs to the MoeA family. As to quaternary structure, homotrimer, homodimer and homooligomer. Interacts with glycine receptors. The cofactor is Mg(2+).

It is found in the postsynaptic cell membrane. It localises to the cell membrane. Its subcellular location is the cytoplasm. The protein localises to the cytosol. The protein resides in the cytoskeleton. It is found in the cell projection. It localises to the dendrite. Its subcellular location is the postsynaptic density. It catalyses the reaction molybdopterin + ATP + H(+) = adenylyl-molybdopterin + diphosphate. The enzyme catalyses adenylyl-molybdopterin + molybdate = Mo-molybdopterin + AMP + H(+). The protein operates within cofactor biosynthesis; molybdopterin biosynthesis. In terms of biological role, microtubule-associated protein involved in membrane protein-cytoskeleton interactions. It is thought to anchor the inhibitory glycine receptor (GLYR) to subsynaptic microtubules. Acts as a major instructive molecule at inhibitory synapses, where it also clusters GABA type A receptors. Also has a catalytic activity and catalyzes two steps in the biosynthesis of the molybdenum cofactor. In the first step, molybdopterin is adenylated. Subsequently, molybdate is inserted into adenylated molybdopterin and AMP is released. This is Gephyrin (GPHN) from Gallus gallus (Chicken).